The chain runs to 372 residues: Probable dual-specificity RNA methyltransferase RlmN (372 aa).

Residue Glu-106 is the Proton acceptor of the active site. The 248-residue stretch at 112 to 359 (YPQRNTVCIS…SCTVRDTRGR (248 aa)) folds into the Radical SAM core domain. Cys-119 and Cys-365 form a disulfide bridge. 3 residues coordinate [4Fe-4S] cluster: Cys-126, Cys-130, and Cys-133. Residues 186–187 (GE), Ser-220, 243–245 (SLH), and Asn-322 contribute to the S-adenosyl-L-methionine site. The S-methylcysteine intermediate role is filled by Cys-365.

This sequence belongs to the radical SAM superfamily. RlmN family. [4Fe-4S] cluster is required as a cofactor.

The protein resides in the cytoplasm. It catalyses the reaction adenosine(2503) in 23S rRNA + 2 reduced [2Fe-2S]-[ferredoxin] + 2 S-adenosyl-L-methionine = 2-methyladenosine(2503) in 23S rRNA + 5'-deoxyadenosine + L-methionine + 2 oxidized [2Fe-2S]-[ferredoxin] + S-adenosyl-L-homocysteine. The catalysed reaction is adenosine(37) in tRNA + 2 reduced [2Fe-2S]-[ferredoxin] + 2 S-adenosyl-L-methionine = 2-methyladenosine(37) in tRNA + 5'-deoxyadenosine + L-methionine + 2 oxidized [2Fe-2S]-[ferredoxin] + S-adenosyl-L-homocysteine. Specifically methylates position 2 of adenine 2503 in 23S rRNA and position 2 of adenine 37 in tRNAs. In Mycolicibacterium smegmatis (strain ATCC 700084 / mc(2)155) (Mycobacterium smegmatis), this protein is Probable dual-specificity RNA methyltransferase RlmN.